A 378-amino-acid polypeptide reads, in one-letter code: Dual-specificity RNA methyltransferase RlmN 2 (378 aa).

The Proton acceptor role is filled by E113. The region spanning 119 to 355 (TEDRRTLCVS…AAYIRRNRGR (237 aa)) is the Radical SAM core domain. A disulfide bond links C126 and C361. C133, C137, and C140 together coordinate [4Fe-4S] cluster. Residues 188–189 (GE), S220, 242–244 (SLN), and N318 each bind S-adenosyl-L-methionine. The active-site S-methylcysteine intermediate is the C361.

Belongs to the radical SAM superfamily. RlmN family. Requires [4Fe-4S] cluster as cofactor.

It is found in the cytoplasm. It catalyses the reaction adenosine(2503) in 23S rRNA + 2 reduced [2Fe-2S]-[ferredoxin] + 2 S-adenosyl-L-methionine = 2-methyladenosine(2503) in 23S rRNA + 5'-deoxyadenosine + L-methionine + 2 oxidized [2Fe-2S]-[ferredoxin] + S-adenosyl-L-homocysteine. The catalysed reaction is adenosine(37) in tRNA + 2 reduced [2Fe-2S]-[ferredoxin] + 2 S-adenosyl-L-methionine = 2-methyladenosine(37) in tRNA + 5'-deoxyadenosine + L-methionine + 2 oxidized [2Fe-2S]-[ferredoxin] + S-adenosyl-L-homocysteine. Specifically methylates position 2 of adenine 2503 in 23S rRNA and position 2 of adenine 37 in tRNAs. m2A2503 modification seems to play a crucial role in the proofreading step occurring at the peptidyl transferase center and thus would serve to optimize ribosomal fidelity. The chain is Dual-specificity RNA methyltransferase RlmN 2 from Myxococcus xanthus (strain DK1622).